A 290-amino-acid polypeptide reads, in one-letter code: 33 kDa chaperonin (290 aa).

Intrachain disulfides connect cysteine 235/cysteine 237 and cysteine 268/cysteine 271.

Belongs to the HSP33 family. Under oxidizing conditions two disulfide bonds are formed involving the reactive cysteines. Under reducing conditions zinc is bound to the reactive cysteines and the protein is inactive.

The protein localises to the cytoplasm. In terms of biological role, redox regulated molecular chaperone. Protects both thermally unfolding and oxidatively damaged proteins from irreversible aggregation. Plays an important role in the bacterial defense system toward oxidative stress. The polypeptide is 33 kDa chaperonin (Streptococcus pyogenes serotype M28 (strain MGAS6180)).